A 258-amino-acid polypeptide reads, in one-letter code: Pimeloyl-[acyl-carrier protein] methyl ester esterase (258 aa).

In terms of domain architecture, AB hydrolase-1 spans Val-17–His-241. Substrate is bound by residues Trp-23, Ser-83 to Leu-84, and Phe-145 to Gln-149. Residue Ser-83 is the Nucleophile of the active site. Residues Asp-207 and His-235 contribute to the active site. His-235 provides a ligand contact to substrate.

It belongs to the AB hydrolase superfamily. Carboxylesterase BioH family. In terms of assembly, monomer.

Its subcellular location is the cytoplasm. The enzyme catalyses 6-carboxyhexanoyl-[ACP] methyl ester + H2O = 6-carboxyhexanoyl-[ACP] + methanol + H(+). It functions in the pathway cofactor biosynthesis; biotin biosynthesis. Functionally, the physiological role of BioH is to remove the methyl group introduced by BioC when the pimeloyl moiety is complete. It allows to synthesize pimeloyl-ACP via the fatty acid synthetic pathway through the hydrolysis of the ester bonds of pimeloyl-ACP esters. The polypeptide is Pimeloyl-[acyl-carrier protein] methyl ester esterase (Neisseria meningitidis serogroup B (strain ATCC BAA-335 / MC58)).